Here is a 219-residue protein sequence, read N- to C-terminus: Redox-sensing transcriptional repressor Rex (219 aa).

Positions 17-56 form a DNA-binding region, H-T-H motif; it reads VYLRVLDNLVKRDIEVVSSKSLSKETGFTAEQIRKDLAFF. Position 91-96 (91-96) interacts with NAD(+); sequence GAGHLG.

Belongs to the transcriptional regulatory Rex family. Homodimer.

The protein resides in the cytoplasm. Functionally, modulates transcription in response to changes in cellular NADH/NAD(+) redox state. The protein is Redox-sensing transcriptional repressor Rex of Natranaerobius thermophilus (strain ATCC BAA-1301 / DSM 18059 / JW/NM-WN-LF).